The primary structure comprises 690 residues: Glutamate--cysteine ligase (690 aa).

Low complexity-rich tracts occupy residues 574-585 (QQQNGHVNNNNN) and 598-619 (NGST…TNGT). The disordered stretch occupies residues 574-620 (QQQNGHVNNNNNNDKKTKNDPIIVNGSTTTTNGTNSGSGITETNGTM).

It belongs to the glutamate--cysteine ligase type 3 family.

The enzyme catalyses L-cysteine + L-glutamate + ATP = gamma-L-glutamyl-L-cysteine + ADP + phosphate + H(+). The protein operates within sulfur metabolism; glutathione biosynthesis; glutathione from L-cysteine and L-glutamate: step 1/2. The chain is Glutamate--cysteine ligase (GCS1) from Candida albicans (Yeast).